We begin with the raw amino-acid sequence, 96 residues long: Aspartyl/glutamyl-tRNA(Asn/Gln) amidotransferase subunit C (96 aa).

The segment at Arg64–Glu96 is disordered.

This sequence belongs to the GatC family. Heterotrimer of A, B and C subunits.

The catalysed reaction is L-glutamyl-tRNA(Gln) + L-glutamine + ATP + H2O = L-glutaminyl-tRNA(Gln) + L-glutamate + ADP + phosphate + H(+). It carries out the reaction L-aspartyl-tRNA(Asn) + L-glutamine + ATP + H2O = L-asparaginyl-tRNA(Asn) + L-glutamate + ADP + phosphate + 2 H(+). Its function is as follows. Allows the formation of correctly charged Asn-tRNA(Asn) or Gln-tRNA(Gln) through the transamidation of misacylated Asp-tRNA(Asn) or Glu-tRNA(Gln) in organisms which lack either or both of asparaginyl-tRNA or glutaminyl-tRNA synthetases. The reaction takes place in the presence of glutamine and ATP through an activated phospho-Asp-tRNA(Asn) or phospho-Glu-tRNA(Gln). In Geobacillus thermodenitrificans (strain NG80-2), this protein is Aspartyl/glutamyl-tRNA(Asn/Gln) amidotransferase subunit C.